The sequence spans 964 residues: Glycine dehydrogenase (decarboxylating) (964 aa).

N6-(pyridoxal phosphate)lysine is present on K711.

Belongs to the GcvP family. As to quaternary structure, the glycine cleavage system is composed of four proteins: P, T, L and H. Pyridoxal 5'-phosphate is required as a cofactor.

The catalysed reaction is N(6)-[(R)-lipoyl]-L-lysyl-[glycine-cleavage complex H protein] + glycine + H(+) = N(6)-[(R)-S(8)-aminomethyldihydrolipoyl]-L-lysyl-[glycine-cleavage complex H protein] + CO2. Functionally, the glycine cleavage system catalyzes the degradation of glycine. The P protein binds the alpha-amino group of glycine through its pyridoxal phosphate cofactor; CO(2) is released and the remaining methylamine moiety is then transferred to the lipoamide cofactor of the H protein. In Prochlorococcus marinus (strain SARG / CCMP1375 / SS120), this protein is Glycine dehydrogenase (decarboxylating).